We begin with the raw amino-acid sequence, 117 residues long: Large ribosomal subunit protein bL20 (117 aa).

It belongs to the bacterial ribosomal protein bL20 family.

Its function is as follows. Binds directly to 23S ribosomal RNA and is necessary for the in vitro assembly process of the 50S ribosomal subunit. It is not involved in the protein synthesizing functions of that subunit. This chain is Large ribosomal subunit protein bL20, found in Nitratidesulfovibrio vulgaris (strain DP4) (Desulfovibrio vulgaris).